A 1312-amino-acid polypeptide reads, in one-letter code: Tetratricopeptide repeat protein 21B (1312 aa).

TPR repeat units lie at residues 4–38 (TDHYITAGIIYYCQEKYHQHVQNLAREGLKKYSND), 110–143 (PKALYYAGMFLWLMGRTDKAREYIDRMLKISNRS), 147–180 (LVLRGWLDLSSEKESTVNKSIRYFEEGIQDNKDI), 182–213 (ALIGKAQYFMAHQNYSGALDVINQIIVNYPPF), 214–247 (LPALTLKMRLFLAQQDWDQTLETAQRILLKDGAN), and 325–358 (AEVATALANNFILQGNVTEAAGWYATAMKLDGNH). A coiled-coil region spans residues 365 to 392 (VIQCQILQGQLEEAEQQLDFLHEIQESI). 16 TPR repeats span residues 493 to 526 (TEPLYYTAQIKYLAGNLEGAQGSLQRCIEVDTAC), 528 to 560 (DFHLLMAQIHYAQGKFAECSVSLETGVSHNFKV), 564 to 597 (PLYHLIRARVLRKTGELQEAIKTLKMTMSLQEMK), 615 to 648 (VSIYLELAELLRLNGEQHEATKIIQDAINEFGGT), 720 to 753 (PHTSVLLGDALMNIQEPEKALEVYNEALHKNPQD), 755 to 787 (SLANRIGQALIKTHQYKKAVNYYEAAQKISGQD), 789 to 820 (LCCDLAELLIKLKQYSKAEAVLKQALAHEPVS), 829 to 861 (AKCLGLLGTTYQNYKKEESADILNKALELQQRI), 881 to 914 (SEICVQLAEHYVDQRNYEQAANYYKEAMVYSQDS), 916 to 947 (VKLQLSRLYLMMGDLDSCENHCSALLENHSFK), 948 to 981 (EEAAMMMADVMFRKQDYTKSIELFDQILEENPDN), 983 to 1015 (AVLSKLIDLLRRSGNLSKAPMFFEKALANSSRT), 1019 to 1052 (PGYNYCKGLYCWYLGQPNDGLKYFNKARKDSEWG), 1193 to 1226 (EKSWLLLADVYIKLGKYDIATELLKRCLLYNKSC), 1228 to 1260 (KAYEYLGFIMENEQSYKDAAANYRLAWDYSNQS), and 1262 to 1295 (PAVGFRLAFNYLKDKKYVDAIDICHKVLKAHPTY).

The protein belongs to the TTC21 family. As to quaternary structure, component of the IFT complex A (IFT-A).

Functionally, component of the IFT complex A (IFT-A), a complex required for retrograde ciliary transport and entry into cilia of G protein-coupled receptors (GPCRs). Negatively modulates the SHH signal transduction. The sequence is that of Tetratricopeptide repeat protein 21B (ttc21b) from Xenopus laevis (African clawed frog).